The sequence spans 233 residues: Zinc import ATP-binding protein ZnuC (233 aa).

The ABC transporter domain occupies 6 to 222 (IEFHNVSKKF…SDFSNALSSL (217 aa)). Position 38–45 (38–45 (GPNGAGKT)) interacts with ATP.

Belongs to the ABC transporter superfamily. Zinc importer (TC 3.A.1.15.5) family. As to quaternary structure, the complex is composed of two ATP-binding proteins (ZnuC), two transmembrane proteins (ZnuB) and a solute-binding protein (ZnuA).

It localises to the cell inner membrane. The catalysed reaction is Zn(2+)(out) + ATP(in) + H2O(in) = Zn(2+)(in) + ADP(in) + phosphate(in) + H(+)(in). Functionally, part of the ABC transporter complex ZnuABC involved in zinc import. Responsible for energy coupling to the transport system. The chain is Zinc import ATP-binding protein ZnuC from Rickettsia bellii (strain RML369-C).